The following is a 648-amino-acid chain: RAF proto-oncogene serine/threonine-protein kinase (648 aa).

Ser-29 carries the post-translational modification Phosphoserine; by MAPK1. Residue Ser-43 is modified to Phosphoserine. The region spanning 56-131 (NTIRVFLPNK…IGEELQVDFL (76 aa)) is the RBD domain. Residues 138-184 (THNFARKTFLKLAFCDICQKFLLNGFRCQTCGYKFHEHCSTKVPTMC) form a Phorbol-ester/DAG-type zinc finger. Zn(2+) is bound by residues His-139, Cys-152, Cys-155, Cys-165, Cys-168, His-173, Cys-176, and Cys-184. The tract at residues 217-335 (MRESVSRMPA…EKNKIRPRGQ (119 aa)) is disordered. The residue at position 233 (Ser-233) is a Phosphoserine; by PKA. Residues 239–271 (TFNTSSPSSEGSLSQRQRSTSTPNVHMVSTTLP) are compositionally biased toward polar residues. A phosphoserine mark is found at Ser-252 and Ser-259. Position 268 is a phosphothreonine; by autocatalysis (Thr-268). A Phosphothreonine; by PKA modification is found at Thr-269. Residues 275-285 (RMIEDAIRSHS) show a composition bias toward basic and acidic residues. Positions 286-301 (ESASPSALSSSPNNLS) are enriched in low complexity. Ser-289, Ser-296, and Ser-301 each carry phosphoserine; by MAPK1. The tract at residues 331 to 349 (RPRGQRDSSYYWEIEASEV) is interaction with PEBP1/RKIP. Ser-338 bears the Phosphoserine; by PAK1, PAK2, PAK3 and PAK5 mark. Position 339 is a phosphoserine; by PAK1, PAK2 and PAK3 (Ser-339). Phosphotyrosine; by SRC occurs at positions 340 and 341. In terms of domain architecture, Protein kinase spans 349 to 609 (VMLSTRIGSG…PQILSSIELL (261 aa)). ATP is bound by residues 355–363 (IGSGSFGTV) and Lys-375. Asp-468 functions as the Proton acceptor in the catalytic mechanism. Position 471 is a phosphoserine (Ser-471). Thr-491 bears the Phosphothreonine mark. Ser-494 bears the Phosphoserine mark. A phosphoserine; by PKC mark is found at Ser-497 and Ser-499. Symmetric dimethylarginine; by PRMT5 is present on Arg-563. At Ser-621 the chain carries Phosphoserine. Ser-642 is modified (phosphoserine; by MAPK1).

It belongs to the protein kinase superfamily. TKL Ser/Thr protein kinase family. RAF subfamily. In terms of assembly, monomer. Homodimer. Heterodimerizes with BRAF and this heterodimer possesses a highly increased kinase activity compared to the respective homodimers or monomers. Heterodimerization is mitogen-regulated and enhanced by 14-3-3 proteins. MAPK1/ERK2 activation can induce a negative feedback that promotes the dissociation of the heterodimer. Forms a multiprotein complex with Ras (M-Ras/MRAS), SHOC2 and protein phosphatase 1 (PPP1CA, PPP1CB and PPP1CC). Interacts with LZTR1. Interacts with Ras proteins; the interaction is antagonized by RIN1. Weakly interacts with RIT1. Interacts with STK3/MST2; the interaction inhibits its pro-apoptotic activity. Interacts (when phosphorylated at Ser-259) with YWHAZ (unphosphorylated at 'Thr-232'). Interacts with MAP3K5/ASF1 (via N-terminus) and this interaction inhibits the proapoptotic function of MAP3K5/ASK1. Interacts with PAK1 (via kinase domain). The phosphorylated form interacts with PIN1. The Ser-338 and Ser-339 phosphorylated form (by PAK1) interacts with BCL2. Interacts with PEBP1/RKIP and this interaction is enhanced if RAF1 is phosphorylated on residues Ser-338, Ser-339, Tyr-340 and Tyr-341. Interacts with ADCY2, ADCY5, ADCY6, DGKH, RCAN1/DSCR1, PPP1R12A, PKB/AKT1, PPP2CA, PPP2R1B, SPRY2, SPRY4, CNKSR1/CNK1, KSR2 and PHB/prohibitin. Interacts with ROCK2. Interacts (via N-terminus) with RGS14 (via RBD domains); the interaction mediates the formation of a ternary complex with BRAF, a ternary complex inhibited by GNAI1. Probably forms a complex composed of chaperones HSP90 and HSP70, co-chaperones CDC37, PPP5C, TSC1 and client protein TSC2, CDK4, AKT, RAF1 and NR3C1; this complex does not contain co-chaperones STIP1/HOP and PTGES3/p23. Interacts with MAP2K1/MEK1 and MAP2K2/MEK2. In its active form, interacts with PRMT5. Interacts with FAM83B; displaces 14-3-3 proteins from RAF1 and activates RAF1. Interacts with PDE8A; the interaction promotes RAF1 activity. Interacts with MFHAS1. Interacts with GLS. Interacts with YWHAZ. Interacts with NEK10 and MAP2K1; the interaction is direct with NEK10 and required for ERK1/2-signaling pathway activation in response to UV irradiation. It depends on Zn(2+) as a cofactor. Phosphorylation at Thr-269, Ser-338, Tyr-341, Thr-491 and Ser-494 results in its activation. Phosphorylation at Ser-29, Ser-43, Ser-289, Ser-296, Ser-301 and Ser-642 by MAPK1/ERK2 results in its inactivation. Phosphorylation at Ser-259 induces the interaction with YWHAZ and inactivates kinase activity. Dephosphorylation of Ser-259 by the SHOC2-MRAS-PP1c (SMP) complex consisting of SHOC2, GTP-bound M-Ras/MRAS and the catalytic subunit of protein phosphatase 1 (PPP1CA, PPP1CB or PPP1CC); this relieves inactivation and stimulates kinase activity. Phosphorylation at Ser-338 by PAK1 and PAK5 and Ser-339 by PAK1 is required for its mitochondrial localization. Phosphorylation at Ser-621 in response to growth factor treatment stabilizes the protein, possibly by preventing proteasomal degradation. Phosphorylation at Ser-289, Ser-296, Ser-301, Ser-338 and Ser-621 are somehow linked to the methylation potential of cells. Treatment of cells with HGF in the presence of the methylation inhibitor 5'-methylthioadenosine (MTA) results in increased phosphorylation at Ser-338 and Ser-621 and decreased phosphorylation at Ser-296, Ser-301 and Ser-338. Dephosphorylation at Ser-338 by PPP5C results in a decreased of activity. Post-translationally, methylated in response to EGF treatment. This modification leads to destabilization of the protein, possibly through proteasomal degradation.

It localises to the cytoplasm. The protein resides in the cell membrane. It is found in the mitochondrion. The protein localises to the nucleus. It catalyses the reaction L-seryl-[protein] + ATP = O-phospho-L-seryl-[protein] + ADP + H(+). The catalysed reaction is L-threonyl-[protein] + ATP = O-phospho-L-threonyl-[protein] + ADP + H(+). Its activity is regulated as follows. Regulation is a highly complex process involving membrane recruitment, protein-protein interactions, dimerization, and phosphorylation/dephosphorylation events. Ras-GTP recruits RAF1 to the membrane, thereby promoting its activation. The inactive conformation of RAF1 is maintained by autoinhibitory interactions occurring between the N-terminal regulatory and the C-terminal catalytic domains and by the binding of a 14-3-3 protein that contacts two phosphorylation sites, Ser-259 and Ser-621. Upon mitogenic stimulation, Ras and PPP2R1A cooperate to release autoinhibition and the subsequent phosphorylation of activating sites: Ser-338, Tyr-341, Thr-491, and Ser-494, yields a fully active kinase. Through a negative feedback mechanism involving MAPK1/ERK2, RAF1 is phosphorylated on Ser-29, Ser-43, Ser-289, Ser-296, Ser-301 and Ser-642 by MAPK1/ERK2, which yields an inactive, desensitized kinase. The signaling-competent conformation of RAF1 is finally re-established by the coordinated action of PIN1, a prolyl isomerase that converts pSer and pThr residues from the cis to the trans conformation, which is preferentially recognized and dephosphorylated by PPP2R1A. Activated by homodimerization and heterodimerization (with BRAF). Also regulated through association with other proteins such as KSR2, CNKSR1/CNK1, PEBP1/RKIP, PHB/prohibitin and SPRY4. PEBP1/RKIP acts by dissociating RAF1 from its substrates MAP2K1/MEK1 and MAP2K2/MEK2. PHB/prohibitin facilitates the displacement of 14-3-3 from RAF1 by activated Ras, thereby promoting cell membrane localization and phosphorylation of RAF1 at the activating Ser-338. SPRY4 inhibits Ras-independent, but not Ras-dependent, activation of RAF1. CNKSR1/CNK1 regulates Src-mediated RAF1 activation. Serine/threonine-protein kinase that acts as a regulatory link between the membrane-associated Ras GTPases and the MAPK/ERK cascade, and this critical regulatory link functions as a switch determining cell fate decisions including proliferation, differentiation, apoptosis, survival and oncogenic transformation. RAF1 activation initiates a mitogen-activated protein kinase (MAPK) cascade that comprises a sequential phosphorylation of the dual-specific MAPK kinases (MAP2K1/MEK1 and MAP2K2/MEK2) and the extracellular signal-regulated kinases (MAPK3/ERK1 and MAPK1/ERK2). The phosphorylated form of RAF1 (on residues Ser-338 and Ser-339, by PAK1) phosphorylates BAD/Bcl2-antagonist of cell death at 'Ser-75'. Phosphorylates adenylyl cyclases: ADCY2, ADCY5 and ADCY6, resulting in their activation. Phosphorylates PPP1R12A resulting in inhibition of the phosphatase activity. Can promote NF-kB activation and inhibit signal transducers involved in motility (ROCK2), apoptosis (MAP3K5/ASK1 and STK3/MST2), proliferation and angiogenesis (RB1). Can protect cells from apoptosis also by translocating to the mitochondria where it binds BCL2 and displaces BAD/Bcl2-antagonist of cell death. Regulates Rho signaling and migration, and is required for normal wound healing. Plays a role in the oncogenic transformation of epithelial cells via repression of the TJ protein, occludin (OCLN) by inducing the up-regulation of a transcriptional repressor SNAI2/SLUG, which induces down-regulation of OCLN. Restricts caspase activation in response to selected stimuli, notably Fas stimulation, pathogen-mediated macrophage apoptosis, and erythroid differentiation. Phosphorylates TNNT2/cardiac muscle troponin T. This chain is RAF proto-oncogene serine/threonine-protein kinase (Raf1), found in Rattus norvegicus (Rat).